A 740-amino-acid chain; its full sequence is Elongation factor 2 (740 aa).

The tr-type G domain maps to Ala-23–Asn-264. Residues Ala-32–Thr-39, Asp-98–His-102, and Asn-152–Asp-155 contribute to the GTP site. A Diphthamide modification is found at His-605.

It belongs to the TRAFAC class translation factor GTPase superfamily. Classic translation factor GTPase family. EF-G/EF-2 subfamily.

The protein localises to the cytoplasm. Its function is as follows. Catalyzes the GTP-dependent ribosomal translocation step during translation elongation. During this step, the ribosome changes from the pre-translocational (PRE) to the post-translocational (POST) state as the newly formed A-site-bound peptidyl-tRNA and P-site-bound deacylated tRNA move to the P and E sites, respectively. Catalyzes the coordinated movement of the two tRNA molecules, the mRNA and conformational changes in the ribosome. The protein is Elongation factor 2 of Pyrobaculum calidifontis (strain DSM 21063 / JCM 11548 / VA1).